The sequence spans 325 residues: 4-hydroxy-3-methylbut-2-enyl diphosphate reductase (325 aa).

C25 contributes to the [4Fe-4S] cluster binding site. (2E)-4-hydroxy-3-methylbut-2-enyl diphosphate-binding residues include H54 and H87. Dimethylallyl diphosphate is bound by residues H54 and H87. Residues H54 and H87 each contribute to the isopentenyl diphosphate site. C109 contacts [4Fe-4S] cluster. H137 lines the (2E)-4-hydroxy-3-methylbut-2-enyl diphosphate pocket. H137 lines the dimethylallyl diphosphate pocket. Residue H137 participates in isopentenyl diphosphate binding. E139 functions as the Proton donor in the catalytic mechanism. T179 is a (2E)-4-hydroxy-3-methylbut-2-enyl diphosphate binding site. C209 serves as a coordination point for [4Fe-4S] cluster. 4 residues coordinate (2E)-4-hydroxy-3-methylbut-2-enyl diphosphate: S237, S238, N239, and S282. 4 residues coordinate dimethylallyl diphosphate: S237, S238, N239, and S282. S237, S238, N239, and S282 together coordinate isopentenyl diphosphate.

This sequence belongs to the IspH family. Requires [4Fe-4S] cluster as cofactor.

It catalyses the reaction isopentenyl diphosphate + 2 oxidized [2Fe-2S]-[ferredoxin] + H2O = (2E)-4-hydroxy-3-methylbut-2-enyl diphosphate + 2 reduced [2Fe-2S]-[ferredoxin] + 2 H(+). The enzyme catalyses dimethylallyl diphosphate + 2 oxidized [2Fe-2S]-[ferredoxin] + H2O = (2E)-4-hydroxy-3-methylbut-2-enyl diphosphate + 2 reduced [2Fe-2S]-[ferredoxin] + 2 H(+). The protein operates within isoprenoid biosynthesis; dimethylallyl diphosphate biosynthesis; dimethylallyl diphosphate from (2E)-4-hydroxy-3-methylbutenyl diphosphate: step 1/1. It participates in isoprenoid biosynthesis; isopentenyl diphosphate biosynthesis via DXP pathway; isopentenyl diphosphate from 1-deoxy-D-xylulose 5-phosphate: step 6/6. Functionally, catalyzes the conversion of 1-hydroxy-2-methyl-2-(E)-butenyl 4-diphosphate (HMBPP) into a mixture of isopentenyl diphosphate (IPP) and dimethylallyl diphosphate (DMAPP). Acts in the terminal step of the DOXP/MEP pathway for isoprenoid precursor biosynthesis. This is 4-hydroxy-3-methylbut-2-enyl diphosphate reductase from Corynebacterium glutamicum (strain ATCC 13032 / DSM 20300 / JCM 1318 / BCRC 11384 / CCUG 27702 / LMG 3730 / NBRC 12168 / NCIMB 10025 / NRRL B-2784 / 534).